The sequence spans 551 residues: Mesoderm induction early response protein 3 (551 aa).

Residues 1-16 (MAEASFGSSSPVGSLS) are compositionally biased toward low complexity. Disordered stretches follow at residues 1 to 62 (MAEA…EKEG) and 113 to 169 (LSGD…GNSP). Basic and acidic residues predominate over residues 17–36 (SEDHDFDPTAEMLVHDYDDE). Phosphoserine occurs at positions 52, 53, and 114. Over residues 121-134 (QSSADDLTPSVTSH) the composition is skewed to polar residues. The span at 154–163 (KESEIEDVET) shows a compositional bias: acidic residues. Position 156 is a phosphoserine (Ser156). Thr163 is subject to Phosphothreonine. Ser165 and Ser168 each carry phosphoserine. An ELM2 domain is found at 174–273 (REIMIGLEYQ…EAIERYCCNG (100 aa)). The 53-residue stretch at 278 to 330 (EGMTAWTEEECRSFEHALMLHGKDFHLIQKDKVRSRTVAECVAFYYMWKKSER) folds into the SANT domain.

It localises to the nucleus. In terms of biological role, transcriptional repressor. This chain is Mesoderm induction early response protein 3 (Mier3), found in Mus musculus (Mouse).